A 549-amino-acid polypeptide reads, in one-letter code: MSSVLKAFERFTIEQELQDRGEEGSIPPETLKSAVKVFVINTPNPTTRYQMLNFCLRIICSQNARASHRVGALITLFSLPSAGMQNHIRLADRSPEAQIERCEIDGFEPGTYRLIPNARANLTANEIAAYALLADDLPPTINNGTPYVHADVEGQPCDEIEQFLDRCYSVLIQAWVMVCKCMTAYDQPAGSADRRFAKYQQQGRLEARYMLQPEAQRLIQTAIRKSLVVRQYLTFELQLARRQGLLSNRYYAMVGDIGKYIENSGLTAFFLTLKYALGTKWSPLSLAAFTGELTKLRSLMMLYRDLGEQARYLALLEAPQIMDFAPGGYPLIFSYAMGVGTVLDVQMRNYTYARPFLNGYYFQIGVETARRQQGTVDNRVADDLGLTPEQRTEVTQLVDRLARGRGAGIPGGPVNPFVPPVQQQQPAAVYEDIPALEESDDDGDEDGGAGFQNGAQAPAVRQGGQNDFRAQPLQDPIQAQLFMPLYPQVSNIPNHQNHQINRIGGMEHQDLLRYNENGDSQQDARGEHGNTFPNNPNQNAQSQVGDWDE.

Over residues 437–447 the composition is skewed to acidic residues; that stretch reads EESDDDGDEDG. Disordered stretches follow at residues 437–469 and 517–549; these read EESD…NDFR and NGDS…DWDE. Phosphoserine is present on Ser439. Residues 531–549 are compositionally biased toward polar residues; it reads TFPNNPNQNAQSQVGDWDE.

The protein belongs to the paramyxoviruses nucleocapsid family. In terms of assembly, homomultimer; forms the nucleocapsid. Binds to the viral genomic RNA. N0 interacts with the phosphoprotein (via N-terminus); this interaction allows P to chaperon N0 to avoid N polymerization before encapsidation. Interacts (via N-terminus) as N-RNA template with the phosphoprotein (via C-terminus); this interaction positions the polymerase on the template.

It localises to the virion. The protein localises to the host cytoplasm. In terms of biological role, forms the helical nucleocapsid (NC) with 12.71 N subunits per helical turn and a rise of 5.3 Angstrom per N subunit, protecting the genome from nucleases. The encapsidated genomic RNA serves as template for transcription and replication; encapsidation by N is coupled to RNA synthesis. Forms the encapsidation complex with the phosphoprotein protein P. Before encapsidation, the newly synthesized free N protein, so-called N0, is chaperoned by P. This chain is Nucleoprotein (N), found in Mumps orthorubulavirus (MuV).